Here is a 647-residue protein sequence, read N- to C-terminus: Putative ankyrin repeat protein L764 (647 aa).

9 ANK repeats span residues 123–154, 202–231, 233–256, 258–284, 289–319, 348–377, 401–431, 529–558, and 588–617; these read LKDR…QINL, LTQE…EYDL, EIIN…SLNE, NVNI…TINS, SMFS…DLTV, DCNL…DLKK, NDVN…NIDL, FILK…DNNE, and NGQN…DVKN.

This is Putative ankyrin repeat protein L764 from Acanthamoeba polyphaga (Amoeba).